A 1881-amino-acid polypeptide reads, in one-letter code: Ankyrin-1 (1881 aa).

An 89 kDa domain region spans residues 1–827; it reads MPYSVGFREA…EDEGEELISF (827 aa). ANK repeat units lie at residues 44–73, 77–106, 110–139, 143–172, 174–201, 205–234, 238–267, 271–300, 304–333, 337–366, 370–399, 403–432, 436–465, 469–498, 502–531, 535–564, 568–597, 601–630, 634–663, 667–696, 700–729, 733–762, and 766–795; these read NGLN…ILET, KGNT…NVNA, KGFT…NQNV, DGFT…KGKV, LPAL…NPDV, TGFT…SVNF, NGIT…QIET, DELT…PIQA, NGLS…EIDD, DHLT…KPNS, NGFT…SIDA, SGLT…SPNV, KVET…KVNA, DDQT…NPNL, AGHT…SQAC, KGFT…HPNA, NGLT…SPHS, NGYT…SANA, QGVT…NGNL, SGLT…MVDA, MGYT…DVNA, LGYS…SPNE, and DGTT…ETSF. (3S)-3-hydroxyasparagine; by HIF1AN; partial is present on asparagine 105. Asparagine 233 carries the (3S)-3-hydroxyasparagine; by HIF1AN; partial modification. Serine 429 is modified (phosphoserine). Asparagine 431 and asparagine 464 each carry (3S)-3-hydroxyasparagine; by HIF1AN; partial. Residues asparagine 629 and asparagine 662 each carry the (3S)-3-hydroxyasparagine; by HIF1AN; partial modification. Aspartate 695 carries the (3S)-3-hydroxyaspartate; by HIF1AN; partial modification. Asparagine 728 carries the post-translational modification (3S)-3-hydroxyasparagine; by HIF1AN; partial. A Phosphoserine modification is found at serine 759. A (3S)-3-hydroxyasparagine; by HIF1AN; partial modification is found at asparagine 761. A phosphoserine mark is found at serine 781, serine 817, serine 834, and serine 856. The interval 875 to 904 is disordered; the sequence is EEQEQASKEYDEDSLIPSSPATETSDNISP. The span at 890-904 shows a compositional bias: polar residues; sequence IPSSPATETSDNISP. 2 consecutive ZU5 domains span residues 913–1068 and 1070–1216; these read FLVS…IMSR and CQDY…LSDC. Threonine 961 is subject to Phosphothreonine. Residue tyrosine 1073 is modified to Phosphotyrosine. Residue serine 1082 is modified to Phosphoserine. The segment at 1234-1362 is UPA domain; that stretch reads TAVPYMAKFV…QHILCHLNIT (129 aa). A phosphothreonine mark is found at threonine 1378 and threonine 1380. Positions 1383-1881 are 55 kDa regulatory domain; it reads ALRYSILSES…SKDHTSTPNP (499 aa). Phosphoserine is present on residues serine 1390, serine 1392, and serine 1396. Position 1400 is a phosphothreonine (threonine 1400). Positions 1403-1487 constitute a Death domain; that stretch reads AEMKMAVISE…EIVNMLEGSG (85 aa). Serine 1428 and serine 1486 each carry phosphoserine. A disordered region spans residues 1486–1510; the sequence is SGRQSRNLKPDRRHTDRDYSLSPSQ. Basic and acidic residues predominate over residues 1493 to 1504; sequence LKPDRRHTDRDY. Phosphoserine is present on residues serine 1523 and serine 1533. Residues 1583 to 1613 are disordered; that stretch reads SSLECSKAEDSDATGHEWKLEGALSEEPRGP. A compositionally biased stretch (basic and acidic residues) spans 1588–1612; the sequence is SKAEDSDATGHEWKLEGALSEEPRG. Serine 1617 carries the post-translational modification Phosphoserine. Disordered regions lie at residues 1637-1703, 1718-1791, and 1840-1859; these read LLEQ…LQDW, QGSW…EAKN, and ADAA…EDPS. A compositionally biased stretch (basic and acidic residues) spans 1642–1658; that stretch reads EGQRSEEKLPGSKRQDD. Phosphoserine occurs at positions 1666, 1671, 1686, 1690, and 1696. A compositionally biased stretch (polar residues) spans 1683–1694; it reads ITHSPTVSQVTE. 2 stretches are compositionally biased toward polar residues: residues 1718–1739 and 1758–1771; these read QGSW…STMT and SEHT…AESS. Residues 1772–1781 are compositionally biased toward basic and acidic residues; that stretch reads QADRDRRQQG.

In terms of assembly, component of the ankyrin-1 complex in the erythrocyte, composed of ANK1, RHCE, RHAG, SLC4A1, EPB42, GYPA, GYPB and AQP1. Interacts with a number of integral membrane proteins and cytoskeletal proteins. Interacts (via N-terminus) with SPTB/spectrin (beta chain). Also interacts with TTN/titin. Isoform Mu17 interacts with OBSCN isoform 3/obscurin. Interacts with HIF1AN. Interacts (via ANK 1-5 repeats) with RHCE; this interaction mediates the primary membrane attachment site for ANK1. Interacts (via ANK 1-2 repeats) with AQP1 (via the N-terminal). Interacts (via ANK 1-13 repeats) with EPB42. Interacts directly with SLC4A1 (via the cytoplasmic domain); this interaction is mediated by the SLC4A1 Band 3-II and Band 3-III dimers. Regulated by phosphorylation. Post-translationally, palmitoylated. In terms of processing, hydroxylated by HIF1AN at several asparagine and 1 aspartate residue within ANK repeat region. Hydroxylation seems to increase the conformational stability of this region and may also modulate protein-protein interactions mediated by the ANK repeat region. (Microbial infection) Probably cleaved by P.falciparum SERA6; the cleavage probably causes the disruption of the actin cytoskeleton and the rupture of the erythrocyte cell membrane releasing the merozoites. In terms of tissue distribution, isoform Mu17, isoform Mu18, isoform Mu19 and isoform Mu20 are expressed in skeletal muscle. Isoform Br21 is expressed in brain.

It localises to the cytoplasm. It is found in the cytoskeleton. Its subcellular location is the membrane. The protein resides in the myofibril. The protein localises to the sarcomere. It localises to the m line. It is found in the sarcoplasmic reticulum. Functionally, component of the ankyrin-1 complex, a multiprotein complex involved in the stability and shape of the erythrocyte membrane. Attaches integral membrane proteins to cytoskeletal elements; binds to the erythrocyte membrane protein band 4.2, to Na-K ATPase, to the lymphocyte membrane protein GP85, and to the cytoskeletal proteins fodrin, tubulin, vimentin and desmin. Erythrocyte ankyrins also link spectrin (beta chain) to the cytoplasmic domain of the erythrocytes anion exchange protein; they retain most or all of these binding functions. In terms of biological role, together with obscurin in skeletal muscle may provide a molecular link between the sarcoplasmic reticulum and myofibrils. This chain is Ankyrin-1, found in Homo sapiens (Human).